Reading from the N-terminus, the 163-residue chain is ATP synthase subunit b 2 (163 aa).

Residues 5 to 25 (SLATLWATIALIIFLGVAIYI) traverse the membrane as a helical segment.

It belongs to the ATPase B chain family. In terms of assembly, F-type ATPases have 2 components, F(1) - the catalytic core - and F(0) - the membrane proton channel. F(1) has five subunits: alpha(3), beta(3), gamma(1), delta(1), epsilon(1). F(0) has three main subunits: a(1), b(2) and c(10-14). The alpha and beta chains form an alternating ring which encloses part of the gamma chain. F(1) is attached to F(0) by a central stalk formed by the gamma and epsilon chains, while a peripheral stalk is formed by the delta and b chains.

It is found in the cell inner membrane. In terms of biological role, f(1)F(0) ATP synthase produces ATP from ADP in the presence of a proton or sodium gradient. F-type ATPases consist of two structural domains, F(1) containing the extramembraneous catalytic core and F(0) containing the membrane proton channel, linked together by a central stalk and a peripheral stalk. During catalysis, ATP synthesis in the catalytic domain of F(1) is coupled via a rotary mechanism of the central stalk subunits to proton translocation. Component of the F(0) channel, it forms part of the peripheral stalk, linking F(1) to F(0). The polypeptide is ATP synthase subunit b 2 (Mesorhizobium japonicum (strain LMG 29417 / CECT 9101 / MAFF 303099) (Mesorhizobium loti (strain MAFF 303099))).